Here is a 429-residue protein sequence, read N- to C-terminus: Adenylosuccinate synthetase (429 aa).

GTP is bound by residues 12 to 18 (GDEGKGK) and 40 to 42 (GHT). Catalysis depends on aspartate 13, which acts as the Proton acceptor. 2 residues coordinate Mg(2+): aspartate 13 and glycine 40. IMP is bound by residues 13–16 (DEGK), 38–41 (NAGH), threonine 128, arginine 142, glutamine 223, threonine 238, and arginine 302. Histidine 41 functions as the Proton donor in the catalytic mechanism. 298 to 304 (VNTGRPR) provides a ligand contact to substrate. Residues arginine 304, 330–332 (KLD), and 412–414 (GVG) contribute to the GTP site.

It belongs to the adenylosuccinate synthetase family. In terms of assembly, homodimer. The cofactor is Mg(2+).

It localises to the cytoplasm. It catalyses the reaction IMP + L-aspartate + GTP = N(6)-(1,2-dicarboxyethyl)-AMP + GDP + phosphate + 2 H(+). Its pathway is purine metabolism; AMP biosynthesis via de novo pathway; AMP from IMP: step 1/2. In terms of biological role, plays an important role in the de novo pathway of purine nucleotide biosynthesis. Catalyzes the first committed step in the biosynthesis of AMP from IMP. The sequence is that of Adenylosuccinate synthetase from Micrococcus luteus (strain ATCC 4698 / DSM 20030 / JCM 1464 / CCM 169 / CCUG 5858 / IAM 1056 / NBRC 3333 / NCIMB 9278 / NCTC 2665 / VKM Ac-2230) (Micrococcus lysodeikticus).